The primary structure comprises 217 residues: Probable D-methionine transport system permease protein MetI (217 aa).

The ABC transmembrane type-1 domain occupies 13-207 (TLETLYMGFI…LIVMLSQKLG (195 aa)). 5 helical membrane passes run 20-40 (GFIATLFAIVIGLPIGLLAFL), 58-78 (VIINIGRSVPFIILLIILLPF), 81-101 (LVVGTTLGTTAAIVPLSVSAI), 143-163 (IPILINGITLTLVALIGYSAM), and 184-204 (NMIYVKWIATIIIVLIVMLSQ).

This sequence belongs to the binding-protein-dependent transport system permease family. CysTW subfamily.

It localises to the cell inner membrane. Functionally, part of the binding-protein-dependent transport system for D-methionine. Probably responsible for the translocation of the substrate across the membrane. The sequence is that of Probable D-methionine transport system permease protein MetI (metI) from Pasteurella multocida (strain Pm70).